The primary structure comprises 153 residues: Troponin C (153 aa).

EF-hand domains lie at 9 to 44 (EQVQMLRKAFDMFDRDKKGYIHTNMVSTILRTLGQT), 45 to 80 (FEENDLQQLIIEIDADGSGELEFDEFLTLTARFLVE), 85 to 120 (AMQEELREAFRMYDKEGNGYIPTSALREILRALDDK), and 121 to 153 (LTEDELDEMIAEIDTDGSGTVDFDEFMEMMTGD). Positions 58, 60, 62, 64, and 69 each coordinate Ca(2+). The Ca(2+) site is built by D134, D136, S138, T140, and E145.

This sequence belongs to the troponin C family.

Troponin is the central regulatory protein of striated muscle contraction. Tn consists of three components: Tn-I which is the inhibitor of actomyosin ATPase, Tn-T which contains the binding site for tropomyosin and Tn-C. The binding of calcium to Tn-C abolishes the inhibitory action of Tn on actin filaments. The protein is Troponin C of Tyrophagus putrescentiae (Mold mite).